Reading from the N-terminus, the 71-residue chain is ATP synthase F(0) complex subunit e, mitochondrial (71 aa).

Position 34 is an N6-acetyllysine (lysine 34). Phosphoserine is present on serine 68.

It belongs to the ATPase e subunit family. In terms of assembly, component of the ATP synthase complex composed at least of ATP5F1A/subunit alpha, ATP5F1B/subunit beta, ATP5MC1/subunit c (homooctomer), MT-ATP6/subunit a, MT-ATP8/subunit 8, ATP5ME/subunit e, ATP5MF/subunit f, ATP5MG/subunit g, ATP5MK/subunit k, ATP5MJ/subunit j, ATP5F1C/subunit gamma, ATP5F1D/subunit delta, ATP5F1E/subunit epsilon, ATP5PF/subunit F6, ATP5PB/subunit b, ATP5PD/subunit d, ATP5PO/subunit OSCP. ATP synthase complex consists of a soluble F(1) head domain (subunits alpha(3) and beta(3)) - the catalytic core - and a membrane F(0) domain - the membrane proton channel (subunits c, a, 8, e, f, g, k and j). These two domains are linked by a central stalk (subunits gamma, delta, and epsilon) rotating inside the F1 region and a stationary peripheral stalk (subunits F6, b, d, and OSCP).

It is found in the mitochondrion. It localises to the mitochondrion inner membrane. Its function is as follows. Subunit e, of the mitochondrial membrane ATP synthase complex (F(1)F(0) ATP synthase or Complex V) that produces ATP from ADP in the presence of a proton gradient across the membrane which is generated by electron transport complexes of the respiratory chain. ATP synthase complex consist of a soluble F(1) head domain - the catalytic core - and a membrane F(1) domain - the membrane proton channel. These two domains are linked by a central stalk rotating inside the F(1) region and a stationary peripheral stalk. During catalysis, ATP synthesis in the catalytic domain of F(1) is coupled via a rotary mechanism of the central stalk subunits to proton translocation. In vivo, can only synthesize ATP although its ATP hydrolase activity can be activated artificially in vitro. Part of the complex F(0) domain. This chain is ATP synthase F(0) complex subunit e, mitochondrial, found in Pongo abelii (Sumatran orangutan).